The primary structure comprises 313 residues: Elongation factor Ts (313 aa).

Residues 82–85 (TDFV) are involved in Mg(2+) ion dislocation from EF-Tu.

It belongs to the EF-Ts family.

The protein resides in the cytoplasm. In terms of biological role, associates with the EF-Tu.GDP complex and induces the exchange of GDP to GTP. It remains bound to the aminoacyl-tRNA.EF-Tu.GTP complex up to the GTP hydrolysis stage on the ribosome. This Nostoc sp. (strain PCC 7120 / SAG 25.82 / UTEX 2576) protein is Elongation factor Ts.